A 946-amino-acid polypeptide reads, in one-letter code: Bifunctional glutamine synthetase adenylyltransferase/adenylyl-removing enzyme (946 aa).

Positions 1-440 (MKPLSSPLQQ…VFNELIGDDE (440 aa)) are adenylyl removase. Residues 449–946 (SEQWRELWQD…ASWQKWLVEE (498 aa)) form an adenylyl transferase region.

Belongs to the GlnE family. It depends on Mg(2+) as a cofactor.

It catalyses the reaction [glutamine synthetase]-O(4)-(5'-adenylyl)-L-tyrosine + phosphate = [glutamine synthetase]-L-tyrosine + ADP. The catalysed reaction is [glutamine synthetase]-L-tyrosine + ATP = [glutamine synthetase]-O(4)-(5'-adenylyl)-L-tyrosine + diphosphate. Functionally, involved in the regulation of glutamine synthetase GlnA, a key enzyme in the process to assimilate ammonia. When cellular nitrogen levels are high, the C-terminal adenylyl transferase (AT) inactivates GlnA by covalent transfer of an adenylyl group from ATP to specific tyrosine residue of GlnA, thus reducing its activity. Conversely, when nitrogen levels are low, the N-terminal adenylyl removase (AR) activates GlnA by removing the adenylyl group by phosphorolysis, increasing its activity. The regulatory region of GlnE binds the signal transduction protein PII (GlnB) which indicates the nitrogen status of the cell. This is Bifunctional glutamine synthetase adenylyltransferase/adenylyl-removing enzyme from Escherichia coli O7:K1 (strain IAI39 / ExPEC).